The following is a 490-amino-acid chain: GTPase Der (490 aa).

EngA-type G domains follow at residues 3–166 and 203–376; these read PVVA…MDDV and IKLA…DSST. GTP is bound by residues 9 to 16, 56 to 60, 118 to 121, 209 to 216, 256 to 260, and 321 to 324; these read GRPNVGKS, DTGGI, NKTD, DTAGV, and NKWD. Residues 377-461 enclose the KH-like domain; the sequence is RRVSTAMLTR…PIRIQFKEGE (85 aa).

This sequence belongs to the TRAFAC class TrmE-Era-EngA-EngB-Septin-like GTPase superfamily. EngA (Der) GTPase family. In terms of assembly, associates with the 50S ribosomal subunit.

Functionally, GTPase that plays an essential role in the late steps of ribosome biogenesis. The sequence is that of GTPase Der from Salmonella typhi.